The chain runs to 222 residues: Ras-related protein RABA4d (222 aa).

Residue 22 to 29 (GDSAVGKT) coordinates GTP. The Effector region signature appears at 44–52 (SKATIGVEF). Residues 70 to 74 (DTAGQ), 128 to 131 (NKCD), and 158 to 159 (SA) contribute to the GTP site. S-geranylgeranyl cysteine attachment occurs at residues Cys-218 and Cys-219.

This sequence belongs to the small GTPase superfamily. Rab family. Interacts with PI4KB1. Specifically expressed in pollen and localized to the tips of growing pollen tubes.

It is found in the cytoplasmic vesicle membrane. Functionally, intracellular vesicle trafficking and protein transport. Plays an important role in the regulation of pollen tube tip growth. The chain is Ras-related protein RABA4d (RABA4D) from Arabidopsis thaliana (Mouse-ear cress).